The primary structure comprises 186 residues: Casparian strip membrane protein 3 (186 aa).

Over 1-26 (MKGSSEHGETSKAAPLGRGGVSKGVS) the chain is Cytoplasmic. The helical transmembrane segment at 27 to 47 (VLDLILRFIAIIGTLASAIAM) threads the bilayer. Topologically, residues 48–74 (GTTNETLPFFTQFIRFKAQYSDLPTLT) are extracellular. The N-linked (GlcNAc...) asparagine glycan is linked to N51. Residues 75–95 (FFVVANSIVCAYLILSLPLSI) traverse the membrane as a helical segment. Residues 96–107 (VHIIRSRAKYSR) lie on the Cytoplasmic side of the membrane. Residues 108 to 128 (LLLIFLDAAMLALVTAGASAA) traverse the membrane as a helical segment. Topologically, residues 129 to 161 (AAIVYLAHKGNVRANWLAICQQFDSFCERISGS) are extracellular. The chain crosses the membrane as a helical span at residues 162 to 182 (LIGSFGAMVMLILLILLSAIA). The Cytoplasmic portion of the chain corresponds to 183–186 (LARR).

The protein belongs to the Casparian strip membrane proteins (CASP) family. In terms of assembly, homodimer and heterodimers.

Its subcellular location is the cell membrane. Regulates membrane-cell wall junctions and localized cell wall deposition. Required for establishment of the Casparian strip membrane domain (CSD) and the subsequent formation of Casparian strips, a cell wall modification of the root endodermis that determines an apoplastic barrier between the intraorganismal apoplasm and the extraorganismal apoplasm and prevents lateral diffusion. The sequence is that of Casparian strip membrane protein 3 from Sorghum bicolor (Sorghum).